The sequence spans 497 residues: Protein TIC 62, chloroplastic (497 aa).

A chloroplast-targeting transit peptide spans 1–55; the sequence is MEQAAKATISLSPPSYAGCCMAACPYRSTRHLRRGGGCSARSISSLRHAPSARVY. Residue 75–104 participates in NADP(+) binding; the sequence is VFIAGATGKVGSRAVREFIKLGFRVRAGVR. The tract at residues 310–497 is disordered; it reads TEDQLANIPS…SSPTPSTPKL (188 aa). Copy 1 of the repeat occupies 346–367; it reads PLSPYTAFVDLKPPSSPSPCPP. The tract at residues 346–495 is 3 X 22 AA approximate repeats; that stretch reads PLSPYTAFVD…PPSSPTPSTP (150 aa). Residues 359–369 show a composition bias toward pro residues; it reads PSSPSPCPPSA. A compositionally biased stretch (low complexity) spans 370-387; that stretch reads AAPAPTSTDTAAAGSSST. Residues 388–408 show a composition bias toward polar residues; the sequence is LNSSATGTPISVDQPKQQQRP. Residues 408-429 form repeat 2; the sequence is PLSPYTRYEELKPPSSPSPTPP. Over residues 430–458 the composition is skewed to low complexity; it reads SAASSASVSASPDTPPAAAASSAALDSSA. The span at 459–476 shows a compositional bias: polar residues; the sequence is NGTPITGDQLNQQQSPLS. Repeat unit 3 spans residues 474–495; sequence PLSPYTRYEELKPPSSPTPSTP. Pro residues predominate over residues 487 to 497; the sequence is PSSPTPSTPKL.

In terms of assembly, part of the Tic complex. Interacts with TIC110 and TIC55. Interacts with LFNR1 and LFNR2. Component of high molecular weight thylakoid LFNRs-containing protein complexes containing LIR1, LFNR1, LFNR2, TIC62 and TROL proteins.

Its subcellular location is the plastid. The protein localises to the chloroplast inner membrane. It localises to the chloroplast stroma. The protein resides in the chloroplast thylakoid. Involved in protein precursor import into chloroplasts. Part of the redox regulon consisting of TIC32, TIC 55 and TIC62. Acts as a membrane anchor of LFNR1 and LFNR2. Has a NADPH-dependent dehydrogenase activity, but only after preincubation with lipids. This Oryza sativa subsp. japonica (Rice) protein is Protein TIC 62, chloroplastic (TIC62).